Reading from the N-terminus, the 52-residue chain is UPF0181 protein HD_1137 (52 aa).

The protein belongs to the UPF0181 family.

In Haemophilus ducreyi (strain 35000HP / ATCC 700724), this protein is UPF0181 protein HD_1137.